A 98-amino-acid polypeptide reads, in one-letter code: Defensin-A1 (98 aa).

Residues 1–19 form the signal peptide; that stretch reads MQTLSFLLALLFLVAQTPA. A propeptide spanning residues 20–62 is cleaved from the precursor; that stretch reads QPTGEGEKGGTIQEPEATEAQDTAAVLMAAGAADGDDSDTKQL. Disulfide bonds link C67–C94, C69–C83, and C73–C93. A propeptide spanning residues 97 to 98 is cleaved from the precursor; the sequence is IK.

Belongs to the alpha-defensin family. In terms of tissue distribution, highly expressed in intestine, and expressed at lower levels in lung and spleen.

The protein resides in the secreted. Has antimicrobial activity. The sequence is that of Defensin-A1 from Ornithorhynchus anatinus (Duckbill platypus).